The chain runs to 263 residues: Oxidoreductase UcpA (263 aa).

10–32 (LITGALQGIGEGIARTFARHGAN) provides a ligand contact to NAD(+). A substrate-binding site is contributed by Ser-141. Tyr-155 serves as the catalytic Proton acceptor.

Belongs to the short-chain dehydrogenases/reductases (SDR) family.

This Escherichia coli O157:H7 protein is Oxidoreductase UcpA (ucpA).